Reading from the N-terminus, the 41-residue chain is U15-myrmicitoxin-Tb1b (41 aa).

An N-terminal signal peptide occupies residues 1 to 25 (MKIVKLITIFAMIATLMVTVTNGEA). Histidine amide is present on H40.

In terms of tissue distribution, expressed by the venom gland.

The protein localises to the secreted. Functionally, venom protein with unknown function. Does not induce paralysis when a high dose is administered by intrathoracic injection into the blowfly Lucilia caesar. The sequence is that of U15-myrmicitoxin-Tb1b from Tetramorium bicarinatum (Tramp ant).